The sequence spans 90 residues: DNA-binding protein HU (90 aa).

Residues 57–90 form a disordered region; sequence ARKGVNPQTRKPITIPERKVPKFKPGKALKEKVK.

Belongs to the bacterial histone-like protein family.

Functionally, histone-like DNA-binding protein which is capable of wrapping DNA to stabilize it, and thus to prevent its denaturation under extreme environmental conditions. This Thermotoga maritima (strain ATCC 43589 / DSM 3109 / JCM 10099 / NBRC 100826 / MSB8) protein is DNA-binding protein HU (hup).